Consider the following 454-residue polypeptide: tRNA(Ile)-lysidine synthase (454 aa).

31 to 36 (SGGADS) is a binding site for ATP.

It belongs to the tRNA(Ile)-lysidine synthase family.

It localises to the cytoplasm. It carries out the reaction cytidine(34) in tRNA(Ile2) + L-lysine + ATP = lysidine(34) in tRNA(Ile2) + AMP + diphosphate + H(+). Functionally, ligates lysine onto the cytidine present at position 34 of the AUA codon-specific tRNA(Ile) that contains the anticodon CAU, in an ATP-dependent manner. Cytidine is converted to lysidine, thus changing the amino acid specificity of the tRNA from methionine to isoleucine. The protein is tRNA(Ile)-lysidine synthase of Porphyromonas gingivalis (strain ATCC 33277 / DSM 20709 / CIP 103683 / JCM 12257 / NCTC 11834 / 2561).